Consider the following 1108-residue polypeptide: Retinal guanylyl cyclase 2 (1108 aa).

A signal peptide spans Met-1–Ala-50. The Extracellular portion of the chain corresponds to Leu-51–Asp-465. Cys-104 and Cys-132 form a disulfide bridge. A helical transmembrane segment spans residues Pro-466–Ile-490. Topologically, residues Arg-491–Pro-1108 are cytoplasmic. The 281-residue stretch at Phe-532 to Phe-812 folds into the Protein kinase domain. The Guanylate cyclase domain maps to Thr-884–Glu-1014.

This sequence belongs to the adenylyl cyclase class-4/guanylyl cyclase family. Homodimer. Interacts with RD3; promotes the exit of GUCY2F from the endoplasmic reticulum and its trafficking to the photoreceptor outer segments. In terms of processing, there are 9 conserved cysteine residues in sensory guanylate cyclases, 6 in the extracellular domain, which may be involved in intra- or interchain disulfide bonds. In terms of tissue distribution, expressed only in the eye.

The protein localises to the membrane. Its subcellular location is the photoreceptor outer segment membrane. The enzyme catalyses GTP = 3',5'-cyclic GMP + diphosphate. Its activity is regulated as follows. Activated by GUCA1B when free calcium ions concentration is low, and inhibited by GUCA1B when free calcium ions concentration is high. Inhibited by RD3. Responsible for the synthesis of cyclic GMP (cGMP) in rods and cones of photoreceptors. Plays an essential role in phototransduction, by mediating cGMP replenishment. May also participate in the trafficking of membrane-asociated proteins to the photoreceptor outer segment membrane. In Rattus norvegicus (Rat), this protein is Retinal guanylyl cyclase 2 (Gucy2f).